Reading from the N-terminus, the 246-residue chain is Orotidine 5'-phosphate decarboxylase (246 aa).

Residues Asp-22, Lys-44, 71 to 80 (DLKYHDIPHT), Thr-130, Arg-191, Gln-201, Gly-221, and Arg-222 contribute to the substrate site. Lys-73 acts as the Proton donor in catalysis.

It belongs to the OMP decarboxylase family. Type 1 subfamily. In terms of assembly, homodimer.

The enzyme catalyses orotidine 5'-phosphate + H(+) = UMP + CO2. It participates in pyrimidine metabolism; UMP biosynthesis via de novo pathway; UMP from orotate: step 2/2. Functionally, catalyzes the decarboxylation of orotidine 5'-monophosphate (OMP) to uridine 5'-monophosphate (UMP). The chain is Orotidine 5'-phosphate decarboxylase from Neisseria meningitidis serogroup C (strain 053442).